The chain runs to 676 residues: Zinc finger CCCH domain-containing protein 38 (676 aa).

5 disordered regions span residues 1 to 134 (MEMS…DHLF), 172 to 217 (SSDY…RSSN), 245 to 307 (RKQP…SWID), 487 to 506 (SVQP…NPNQ), and 533 to 594 (IQEV…DPKG). Residues 12–21 (SKWDSKEDTH) are compositionally biased toward basic and acidic residues. Polar residues predominate over residues 58-79 (RVSQNNDNSYFSEQDGTRQQFV). Basic and acidic residues-rich tracts occupy residues 101–110 (ARRDAGSYDR), 124–134 (EFNKRGSDHLF), and 192–212 (SEFT…EGGF). The C3H1-type zinc-finger motif lies at 214 to 243 (RSSNIPCKFFAAGTGFCRNGKYCRFSHHVA). Positions 251–262 (NNNNFYRQDNNN) are enriched in low complexity. The segment covering 269 to 278 (KWNDVERLDN) has biased composition (basic and acidic residues). Basic and acidic residues predominate over residues 538 to 562 (LDPKENGDKKTDEASKEEEGKKTGE). The segment covering 563–583 (DTNDAENVVDEDEDGDDDGSD) has biased composition (acidic residues). Over residues 584–594 (EENKKEKDPKG) the composition is skewed to basic and acidic residues.

This is Zinc finger CCCH domain-containing protein 38 from Arabidopsis thaliana (Mouse-ear cress).